Here is a 199-residue protein sequence, read N- to C-terminus: Chaperone protein TorD (199 aa).

Belongs to the TorD/DmsD family. TorD subfamily.

It is found in the cytoplasm. Functionally, involved in the biogenesis of TorA. Acts on TorA before the insertion of the molybdenum cofactor and, as a result, probably favors a conformation of the apoenzyme that is competent for acquiring the cofactor. In Escherichia coli O127:H6 (strain E2348/69 / EPEC), this protein is Chaperone protein TorD.